The following is a 596-amino-acid chain: Nucleotidyltransferase lcsQ (596 aa).

The transit peptide at 1 to 22 (MLLRLSPSRMALKRKLDSFLRN) directs the protein to the mitochondrion. The disordered stretch occupies residues 475–504 (IVAHPGKPSQPADVPETPLSSGASKSKNLD).

This sequence belongs to the tRNA nucleotidyltransferase/poly(A) polymerase family.

Its subcellular location is the mitochondrion. Nucleotidyltransferase; part of the gene cluster that mediates the biosynthesis of the lipopeptide antibiotics leucinostatins that show extensive biological activities, including antimalarial, antiviral, antibacterial, antifungal, and antitumor activities, as well as phytotoxic. The function of lcsQ within the leucinostatins biosynthesis has not been identified yet. This chain is Nucleotidyltransferase lcsQ, found in Purpureocillium lilacinum (Paecilomyces lilacinus).